The primary structure comprises 66 residues: MARGKDARVTVILECTNCVRGGVTKESTGISRYITEKNRHNTPGQLELKKFCPYCYKQTIHGEIKK.

It belongs to the bacterial ribosomal protein bL33 family.

Its subcellular location is the plastid. The protein localises to the chloroplast. This chain is Large ribosomal subunit protein bL33c, found in Oenothera argillicola (Appalachian evening primrose).